The following is a 329-amino-acid chain: Serine, glycine and glutamine-rich protein (329 aa).

A signal peptide spans 1–16 (MKTVLLFVVLVGLAYC). The segment covering 38 to 48 (SSSSSSSSSSS) has biased composition (low complexity). The tract at residues 38-80 (SSSSSSSSSSSSGGGGSSGGGASGGGGGSSSGGGGASGGGGGG) is disordered. Positions 49–80 (SGGGGSSGGGASGGGGGSSSGGGGASGGGGGG) are enriched in gly residues.

Prismatic layer of shell (at protein level). Expressed primarily in the mantle with highest level in the mantle edge and lower level in the mantle pallium.

The protein localises to the secreted. This Pinctada maxima (Silver-lipped pearl oyster) protein is Serine, glycine and glutamine-rich protein.